A 452-amino-acid chain; its full sequence is Pentatricopeptide repeat-containing protein At2g30780 (452 aa).

7 PPR repeats span residues 137–171, 173–207, 208–242, 243–273, 350–384, 385–419, and 420–452; these read TASV…THCA, TVVT…KLPP, NSVT…PVEP, DTDT…IKDQ, KSSI…GWKL, CRSL…NYGL, and VTKT…KRGL.

This sequence belongs to the PPR family. P subfamily.

This chain is Pentatricopeptide repeat-containing protein At2g30780, found in Arabidopsis thaliana (Mouse-ear cress).